A 311-amino-acid polypeptide reads, in one-letter code: tRNA pseudouridine synthase B (311 aa).

Catalysis depends on aspartate 52, which acts as the Nucleophile.

The protein belongs to the pseudouridine synthase TruB family. Type 1 subfamily.

It catalyses the reaction uridine(55) in tRNA = pseudouridine(55) in tRNA. Responsible for synthesis of pseudouridine from uracil-55 in the psi GC loop of transfer RNAs. This chain is tRNA pseudouridine synthase B, found in Burkholderia mallei (strain ATCC 23344).